The following is a 117-amino-acid chain: Fluoride-specific ion channel FluC 2 (117 aa).

4 helical membrane passes run 1-21 (MITILLVMLGGGIGAVLRALI), 33-53 (IPIATSIVNITGSLIIGFMMG), 61-81 (MFPFFVTGVLGGLTTFSTLSS), and 94-114 (IRFVVYSLLQFILGFIACFYG). Residues glycine 71 and threonine 74 each coordinate Na(+).

It belongs to the fluoride channel Fluc/FEX (TC 1.A.43) family.

The protein resides in the cell membrane. The catalysed reaction is fluoride(in) = fluoride(out). Na(+) is not transported, but it plays an essential structural role and its presence is essential for fluoride channel function. Fluoride-specific ion channel. Important for reducing fluoride concentration in the cell, thus reducing its toxicity. This is Fluoride-specific ion channel FluC 2 from Staphylococcus epidermidis (strain ATCC 35984 / DSM 28319 / BCRC 17069 / CCUG 31568 / BM 3577 / RP62A).